We begin with the raw amino-acid sequence, 319 residues long: Polyprenyl transferase macG (319 aa).

9 consecutive transmembrane segments (helical) span residues 28–45 (AWLCWYPAIWGACVAAGM), 48–68 (VSLELAPFLRLLFGIWASVTA), 106–126 (AVVAFICWLPVTLAITWGTLG), 127–147 (PAVMAGFIPVWVLSTIYPFMK), 152–172 (FPQVVLGAIIGGAVFPGWVGI), 182–202 (ALPLFFATASWVVYFDVFYAT), 224–244 (VQILLAVLGALQVLLFAVTAL), 249–269 (SLIFWVLGLGVWMVNVPWHIL), and 289–309 (LGLYLTGVSLLELFVVRVYDI).

The protein belongs to the UbiA prenyltransferase family. It depends on Mg(2+) as a cofactor.

The protein resides in the membrane. Its pathway is secondary metabolite biosynthesis; terpenoid biosynthesis. Functionally, polyprenyl transferase; part of the gene cluster that mediates the biosynthesis of macrophorins, isoprenoid epoxycyclohexenones containing cyclized drimane moieties. The first step of the pathway is the synthesis of 6-methylsalicylic acid (6-MSA) by the polyketide synthase macA. 6-MSA is then converted to m-cresol by the decarboxylase macB. The cytochrome P450 monooxygenase macC then catalyzes the oxidation of m-cresol to toluquinol. Epoxidation of toluquinol is then performed by the short chain dehydrogenase macD, with the help of macE, and a further prenylation by macG leads to 7-deacetoxyyanuthone A. The next step is the hydroxylation of C-22 of 7-deacetoxyyanuthone A by the cytochrome P450 monooxygenase macH to yield 22-deacetylyanuthone A. O-Mevalon transferase macI then attaches mevalon to the hydroxyl group of 22-deacetylyanuthone A to produce yanuthone E. The terpene cyclase macJ catalyzes the cyclization of 22-deacetylyanuthone A to macrophorin A. MacJ is also able to catalyze cyclization of yanuthone E and 7-deacetoxyyanuthone A to their corresponding macrophorins. The macJ products can be further modified by macH and macJ, as well as by the FAD-dependent monooxygenase macF, to produce additional macrophorins, including 4'-oxomacrophorin A, 4'-oxomacrophorin D and 4'-oxomacrophorin E. The chain is Polyprenyl transferase macG from Penicillium terrestre.